Here is a 59-residue protein sequence, read N- to C-terminus: Putative potassium channel toxin Ts24 (59 aa).

Residues Met-1 to Gln-22 form the signal peptide. Intrachain disulfides connect Cys-29/Cys-50, Cys-35/Cys-55, and Cys-39/Cys-57.

It belongs to the short scorpion toxin superfamily. Potassium channel inhibitor family. Alpha-KTx 04 subfamily. Expressed by the venom gland.

Its subcellular location is the secreted. Functionally, potently blocks Kv1.1/KCNA1 (85%), Kv1.2/KCNA2 (91%), Kv1.3/KCNA3 (89%), Kv1.6/KCNA6 (94%), and Shaker (97%). The sequence is that of Putative potassium channel toxin Ts24 from Tityus serrulatus (Brazilian scorpion).